A 312-amino-acid chain; its full sequence is Ribosomal protein L11 methyltransferase (312 aa).

4 residues coordinate S-adenosyl-L-methionine: Thr159, Gly180, Asp201, and Asn244.

It belongs to the methyltransferase superfamily. PrmA family.

Its subcellular location is the cytoplasm. It carries out the reaction L-lysyl-[protein] + 3 S-adenosyl-L-methionine = N(6),N(6),N(6)-trimethyl-L-lysyl-[protein] + 3 S-adenosyl-L-homocysteine + 3 H(+). Methylates ribosomal protein L11. This is Ribosomal protein L11 methyltransferase from Desulfitobacterium hafniense (strain DSM 10664 / DCB-2).